The following is a 377-amino-acid chain: Succinyl-diaminopimelate desuccinylase (377 aa).

Residue H66 coordinates Zn(2+). The active site involves D68. Residue D99 coordinates Zn(2+). Catalysis depends on E133, which acts as the Proton acceptor. Residues E134, E162, and H348 each contribute to the Zn(2+) site.

It belongs to the peptidase M20A family. DapE subfamily. Homodimer. The cofactor is Zn(2+). Co(2+) is required as a cofactor.

It catalyses the reaction N-succinyl-(2S,6S)-2,6-diaminopimelate + H2O = (2S,6S)-2,6-diaminopimelate + succinate. Its pathway is amino-acid biosynthesis; L-lysine biosynthesis via DAP pathway; LL-2,6-diaminopimelate from (S)-tetrahydrodipicolinate (succinylase route): step 3/3. Its function is as follows. Catalyzes the hydrolysis of N-succinyl-L,L-diaminopimelic acid (SDAP), forming succinate and LL-2,6-diaminopimelate (DAP), an intermediate involved in the bacterial biosynthesis of lysine and meso-diaminopimelic acid, an essential component of bacterial cell walls. This Bordetella avium (strain 197N) protein is Succinyl-diaminopimelate desuccinylase.